Here is a 192-residue protein sequence, read N- to C-terminus: GTP cyclohydrolase 1 (192 aa).

Zn(2+)-binding residues include Cys-76, His-79, and Cys-148.

This sequence belongs to the GTP cyclohydrolase I family. As to quaternary structure, toroid-shaped homodecamer, composed of two pentamers of five dimers.

The enzyme catalyses GTP + H2O = 7,8-dihydroneopterin 3'-triphosphate + formate + H(+). It participates in cofactor biosynthesis; 7,8-dihydroneopterin triphosphate biosynthesis; 7,8-dihydroneopterin triphosphate from GTP: step 1/1. The protein is GTP cyclohydrolase 1 of Carboxydothermus hydrogenoformans (strain ATCC BAA-161 / DSM 6008 / Z-2901).